We begin with the raw amino-acid sequence, 207 residues long: Suppressor of IKBKE 1 (207 aa).

2 coiled-coil regions span residues 70-102 (HILL…DALE) and 164-192 (CKVQ…ESLQ).

It belongs to the SIKE family. Interacts with IKBKE and TBK1 via its coiled coil region. Interaction with TBK1 is disrupted upon viral infection or TLR3 stimulation. Interacts with CDC42BPB. Interacts with SIKE1 which mediates association with the STRIPAK core complex composed of PP2A catalytic and scaffolding subunits, the striatins (PP2A regulatory subunits), the striatin-associated proteins MOB4, STRIP1 and STRIP2, PDCD10 and members of the STE20 kinases, such as STK24 and STK26.

The protein localises to the cytoplasm. Physiological suppressor of IKK-epsilon and TBK1 that plays an inhibitory role in virus- and TLR3-triggered IRF3. Inhibits TLR3-mediated activation of interferon-stimulated response elements (ISRE) and the IFN-beta promoter. May act by disrupting the interactions of IKBKE or TBK1 with TICAM1/TRIF, IRF3 and RIGI. Does not inhibit NF-kappa-B activation pathways. Associates with the striatin-interacting phosphatase and kinase (STRIPAK) core complex, forming the extended (SIKE1:SLMAP)STRIPAK complex. The (SIKE1:SLMAP)STRIPAK complex dephosphorylates STK3 leading to the inhibition of Hippo signaling and the control of cell growth. This chain is Suppressor of IKBKE 1 (Sike1), found in Mus musculus (Mouse).